A 743-amino-acid polypeptide reads, in one-letter code: Tudor domain-containing protein 3 (743 aa).

The interval 241-262 (KTFGGGGGGARSNLNIGAAGHR) is disordered. Positions 286-326 (LVDEKALKHITEMGFSKEASRQALMDNANNLEAALNVLLNS) constitute a UBA domain. Disordered regions lie at residues 327–365 (SKQK…APST) and 380–549 (EEPK…CYER). The residue at position 349 (Ser-349) is a Phosphoserine. A compositionally biased stretch (basic and acidic residues) spans 414–431 (PRNDTRQPRNERPPRFQK). A compositionally biased stretch (polar residues) spans 432-445 (DTPTSKSTVENSVL). Ser-438 bears the Phosphoserine mark. Composition is skewed to basic and acidic residues over residues 464–484 (AEER…KDAS) and 536–549 (RENQ…CYER). A Glycyl lysine isopeptide (Lys-Gly) (interchain with G-Cter in SUMO2) cross-link involves residue Lys-563. Residues 572–603 (TDYPRPVQSNSLGVPNGETAPPLKGRRVGPIK) are disordered. In terms of domain architecture, Tudor spans 647-707 (VWKPGDECFA…KPVQTEAWEE (61 aa)). A compositionally biased stretch (basic and acidic residues) spans 711 to 725 (YDHTIEFRRGGDGQP). The disordered stretch occupies residues 711–743 (YDHTIEFRRGGDGQPRRSTRPTQQFYQPPRARN). The segment at 723–743 (GQPRRSTRPTQQFYQPPRARN) is EBM motif; may mediate interaction with the EJC.

Component of mRNA stress granules. Interacts with FMR1, FXR1, FXR2, EWSR1, FUS, SERBP1, EEF1A1 and DDX3X or DDX3Y, and with the small nuclear ribonucleoprotein-associated proteins SNRPB and SNRPN. Interacts with 'Lys-48'-linked tetra-ubiquitin, but not with monoubiquitin or 'Lys-63'-linked ubiquitin chains. May interact with the exon junction complex (EJC) composed at least of CASC3, EIF4A3, MAGOH and RBM8A. Interacts with POLR2A (via the C-terminal domain (CTD)).

It localises to the cytoplasm. Its subcellular location is the nucleus. In terms of biological role, scaffolding protein that specifically recognizes and binds dimethylarginine-containing proteins. Plays a role in the regulation of translation of target mRNAs by binding Arg/Gly-rich motifs (GAR) in dimethylarginine-containing proteins. In nucleus, acts as a coactivator: recognizes and binds asymmetric dimethylation on the core histone tails associated with transcriptional activation (H3R17me2a and H4R3me2a) and recruits proteins at these arginine-methylated loci. In cytoplasm, acts as an antiviral factor that participates in the assembly of stress granules together with G3BP1. This is Tudor domain-containing protein 3 (Tdrd3) from Mus musculus (Mouse).